A 1070-amino-acid polypeptide reads, in one-letter code: Granule associated Rac and RHOG effector protein 1 (1070 aa).

Disordered regions lie at residues 681 to 771, 855 to 992, and 1032 to 1070; these read EQKA…VGAG, SQAM…STLP, and SYVQ…LPQY. Positions 692–702 are enriched in pro residues; it reads PSLPVPPPPRA. 3 stretches are compositionally biased toward low complexity: residues 719–742, 906–924, and 951–962; these read PQQQ…QPIG, AQGD…NGDS, and TSTLPSPPLLTT. Ser-723 carries the phosphoserine modification. Residues 977-992 are compositionally biased toward pro residues; that stretch reads PKAPWQHPSPLPSTLP. Over residues 1046-1058 the composition is skewed to low complexity; sequence HKAAPKGFKAFPG.

In terms of assembly, interacts with AGO2 and TNRC6A.

It localises to the cytoplasm. It is found in the P-body. Functionally, acts as an effector of RAC1. Associates with CCR4-NOT complex which is one of the major cellular mRNA deadenylases and is linked to various cellular processes including bulk mRNA degradation, miRNA-mediated repression, translational repression during translational initiation and general transcription regulation. May also play a role in miRNA silencing machinery. The polypeptide is Granule associated Rac and RHOG effector protein 1 (Homo sapiens (Human)).